The sequence spans 328 residues: Diaminopimelate epimerase (328 aa).

Substrate is bound by residues Asn-14 and Asn-73. Cys-82 acts as the Proton donor in catalysis. Substrate contacts are provided by residues 83–84 (GN), Asn-170, Asn-206, and 224–225 (ER). Cys-233 serves as the catalytic Proton acceptor. 234 to 235 (GT) contacts substrate.

The protein belongs to the diaminopimelate epimerase family. Homodimer.

The protein resides in the cytoplasm. It catalyses the reaction (2S,6S)-2,6-diaminopimelate = meso-2,6-diaminopimelate. It functions in the pathway amino-acid biosynthesis; L-lysine biosynthesis via DAP pathway; DL-2,6-diaminopimelate from LL-2,6-diaminopimelate: step 1/1. Its function is as follows. Catalyzes the stereoinversion of LL-2,6-diaminopimelate (L,L-DAP) to meso-diaminopimelate (meso-DAP), a precursor of L-lysine and an essential component of the bacterial peptidoglycan. The polypeptide is Diaminopimelate epimerase (Listeria welshimeri serovar 6b (strain ATCC 35897 / DSM 20650 / CCUG 15529 / CIP 8149 / NCTC 11857 / SLCC 5334 / V8)).